The sequence spans 729 residues: 1,4-alpha-glucan branching enzyme GlgB (729 aa).

Aspartate 407 serves as the catalytic Nucleophile. Glutamate 460 serves as the catalytic Proton donor.

Belongs to the glycosyl hydrolase 13 family. GlgB subfamily. Monomer.

It carries out the reaction Transfers a segment of a (1-&gt;4)-alpha-D-glucan chain to a primary hydroxy group in a similar glucan chain.. It participates in glycan biosynthesis; glycogen biosynthesis. Its function is as follows. Catalyzes the formation of the alpha-1,6-glucosidic linkages in glycogen by scission of a 1,4-alpha-linked oligosaccharide from growing alpha-1,4-glucan chains and the subsequent attachment of the oligosaccharide to the alpha-1,6 position. This Pseudoalteromonas atlantica (strain T6c / ATCC BAA-1087) protein is 1,4-alpha-glucan branching enzyme GlgB.